The primary structure comprises 689 residues: Glycine--tRNA ligase beta subunit (689 aa).

It belongs to the class-II aminoacyl-tRNA synthetase family. As to quaternary structure, tetramer of two alpha and two beta subunits.

Its subcellular location is the cytoplasm. It catalyses the reaction tRNA(Gly) + glycine + ATP = glycyl-tRNA(Gly) + AMP + diphosphate. The chain is Glycine--tRNA ligase beta subunit from Acinetobacter baylyi (strain ATCC 33305 / BD413 / ADP1).